The primary structure comprises 597 residues: Spastin (597 aa).

Residues 1–20 are Cytoplasmic-facing; it reads MPNNDILRPLAIPAKYVGSF. Residues 21–37 constitute an intramembrane region (helical); sequence LVFLYNGLYFVFVVNLW. Residues 38–597 are Cytoplasmic-facing; that stretch reads SRLFGKATKT…DWNRLYGSNA (560 aa). The tract at residues 56–80 is disordered; the sequence is RKLGKDMASRAPPRRGQSSEDNEDG. The 78-residue stretch at 91-168 folds into the MIT domain; it reads HHKQAYAYIA…ENTRERMDEL (78 aa). The disordered stretch occupies residues 193–289; it reads SARKTSSEPS…PAMMAKQSCV (97 aa). Positions 214-231 are enriched in polar residues; it reads SYKQSKSYKNSTTVTTKR. Low complexity predominate over residues 232-252; it reads SQASPSFSSSSSSVNSTAGSS.

The protein belongs to the AAA ATPase family. Spastin subfamily. As to quaternary structure, homohexamer. The homohexamer is stabilized by ATP-binding. The homohexamer may adopt a ring conformation through which microtubules pass prior to being severed. Interacts with microtubules.

It is found in the membrane. Its subcellular location is the cytoplasm. The protein localises to the cytoskeleton. It localises to the microtubule organizing center. The protein resides in the centrosome. The catalysed reaction is n ATP + n H2O + a microtubule = n ADP + n phosphate + (n+1) alpha/beta tubulin heterodimers.. Its function is as follows. ATP-dependent microtubule severing protein. Microtubule severing may promote reorganization of cellular microtubule arrays and the release of microtubules from the microtubule organizing center following nucleation. In Nematostella vectensis (Starlet sea anemone), this protein is Spastin.